A 149-amino-acid polypeptide reads, in one-letter code: Large ribosomal subunit protein bL9 (149 aa).

The protein belongs to the bacterial ribosomal protein bL9 family.

Its function is as follows. Binds to the 23S rRNA. The chain is Large ribosomal subunit protein bL9 from Vibrio vulnificus (strain CMCP6).